A 392-amino-acid chain; its full sequence is Protein-glutamate methylesterase/protein-glutamine glutaminase (392 aa).

The 118-residue stretch at 9–126 (TVLIVDDSPF…GADIQALARD (118 aa)) folds into the Response regulatory domain. Asp60 bears the 4-aspartylphosphate mark. A disordered region spans residues 148–194 (VSRISSASGSRPPWTAGAASENTNRLSSPGSTSSTLGSAKGRSLDSG). The segment covering 173–185 (LSSPGSTSSTLGS) has biased composition (low complexity). Residues 198–392 (PKYPVEIVAI…RHIVECVQRR (195 aa)) form the CheB-type methylesterase domain. Active-site residues include Ser210, His237, and Asp334.

It belongs to the CheB family. Phosphorylated by CheA. Phosphorylation of the N-terminal regulatory domain activates the methylesterase activity.

The protein localises to the cytoplasm. The enzyme catalyses [protein]-L-glutamate 5-O-methyl ester + H2O = L-glutamyl-[protein] + methanol + H(+). It carries out the reaction L-glutaminyl-[protein] + H2O = L-glutamyl-[protein] + NH4(+). Involved in chemotaxis. Part of a chemotaxis signal transduction system that modulates chemotaxis in response to various stimuli. Catalyzes the demethylation of specific methylglutamate residues introduced into the chemoreceptors (methyl-accepting chemotaxis proteins or MCP) by CheR. Also mediates the irreversible deamidation of specific glutamine residues to glutamic acid. The chain is Protein-glutamate methylesterase/protein-glutamine glutaminase from Desulfitobacterium hafniense (strain Y51).